Reading from the N-terminus, the 160-residue chain is 6,7-dimethyl-8-ribityllumazine synthase (160 aa).

5-amino-6-(D-ribitylamino)uracil-binding positions include F28, 62-64, and 86-88; these read ALE and AVI. 91–92 serves as a coordination point for (2S)-2-hydroxy-3-oxobutyl phosphate; sequence ET. The Proton donor role is filled by H94. N119 is a binding site for 5-amino-6-(D-ribitylamino)uracil. A (2S)-2-hydroxy-3-oxobutyl phosphate-binding site is contributed by R133.

It belongs to the DMRL synthase family.

It catalyses the reaction (2S)-2-hydroxy-3-oxobutyl phosphate + 5-amino-6-(D-ribitylamino)uracil = 6,7-dimethyl-8-(1-D-ribityl)lumazine + phosphate + 2 H2O + H(+). It functions in the pathway cofactor biosynthesis; riboflavin biosynthesis; riboflavin from 2-hydroxy-3-oxobutyl phosphate and 5-amino-6-(D-ribitylamino)uracil: step 1/2. Functionally, catalyzes the formation of 6,7-dimethyl-8-ribityllumazine by condensation of 5-amino-6-(D-ribitylamino)uracil with 3,4-dihydroxy-2-butanone 4-phosphate. This is the penultimate step in the biosynthesis of riboflavin. This Nitrosospira multiformis (strain ATCC 25196 / NCIMB 11849 / C 71) protein is 6,7-dimethyl-8-ribityllumazine synthase.